A 373-amino-acid chain; its full sequence is MAKIMVAMSGGVDSSLAAALLHEAGHDVTGVTLHLWEGDDDRLAESLCCSQEMTESARRVCAQLGIPYYVFNYQREFRRYVIEYFLREYASGFTPNPCLECNREIKFRALLARARTLGFDYVATGHYARIRADETRHNGEDAGLPPAERAQRTTYRLLRAVDREKDQSYMLYMLGQDDLARLIFPIGEYTKAEVRAMAAARGLASANRPESQDICFVPGGDYRNLLREERPDALRPGPILDLEGREVGRHQGLPLYTIGQRRGLGIATGQPMYVTALDVARNAVIVGPESALRRESLRAEWVTFVSGMWPEAPFDCLAQIRAHADAVPARVIPGEAGTVDVHFSRPQRAVTPGQAIVFYDGDVVLGGGRIARD.

ATP is bound by residues 7-14 (AMSGGVDS) and Leu-33. Cys-101 (nucleophile) is an active-site residue. A disulfide bridge links Cys-101 with Cys-215. Gly-125 is a binding site for ATP. The interaction with tRNA stretch occupies residues 165-167 (KDQ). Cys-215 acts as the Cysteine persulfide intermediate in catalysis.

The protein belongs to the MnmA/TRMU family.

It is found in the cytoplasm. It catalyses the reaction S-sulfanyl-L-cysteinyl-[protein] + uridine(34) in tRNA + AH2 + ATP = 2-thiouridine(34) in tRNA + L-cysteinyl-[protein] + A + AMP + diphosphate + H(+). Its function is as follows. Catalyzes the 2-thiolation of uridine at the wobble position (U34) of tRNA, leading to the formation of s(2)U34. In Roseiflexus sp. (strain RS-1), this protein is tRNA-specific 2-thiouridylase MnmA.